The primary structure comprises 144 residues: Snaclec trimecetin subunit beta (144 aa).

Residues 1–23 form the signal peptide; it reads MGRFIFVSFGLLVVFLSLSGTAA. 3 disulfides stabilise this stretch: Cys-25-Cys-36, Cys-53-Cys-142, and Cys-119-Cys-134. In terms of domain architecture, C-type lectin spans 32 to 143; that stretch reads FRRYCYQVFQ…CSSKRYVVCK (112 aa).

Belongs to the snaclec family. As to quaternary structure, heterodimer of subunits alpha and beta; disulfide-linked. Expressed by the venom gland.

Its subcellular location is the secreted. Functionally, snaclec that induces platelet aggregation in either human platelet rich plasma (PRP) or washed platelet suspensions. It causes aggregation in a dose-dependent manner even in the absence of various platelet agonists such as ADP or von Willebrand factor (vWF). Interestingly, it does not induce aggregation in rabbit PRP. A monoclonal antibody against the platelet GPIb receptor blocks the aggregation induced by trimecetin, suggesting that it acts by binding to GPIb (GP1BA/GP1BB). This Protobothrops mucrosquamatus (Taiwan habu) protein is Snaclec trimecetin subunit beta.